The following is a 501-amino-acid chain: Glycerol kinase (501 aa).

Residue Thr-14 coordinates ADP. The ATP site is built by Thr-14, Thr-15, and Ser-16. Thr-14 is a binding site for sn-glycerol 3-phosphate. Arg-18 is a binding site for ADP. Sn-glycerol 3-phosphate-binding residues include Arg-84, Glu-85, Tyr-136, and Asp-246. 5 residues coordinate glycerol: Arg-84, Glu-85, Tyr-136, Asp-246, and Gln-247. Residues Thr-268 and Gly-311 each coordinate ADP. ATP contacts are provided by Thr-268, Gly-311, Gln-315, and Gly-412. Gly-412 and Asn-416 together coordinate ADP.

The protein belongs to the FGGY kinase family. As to quaternary structure, homotetramer and homodimer (in equilibrium).

The enzyme catalyses glycerol + ATP = sn-glycerol 3-phosphate + ADP + H(+). It functions in the pathway polyol metabolism; glycerol degradation via glycerol kinase pathway; sn-glycerol 3-phosphate from glycerol: step 1/1. Its activity is regulated as follows. Activated by phosphorylation and inhibited by fructose 1,6-bisphosphate (FBP). In terms of biological role, key enzyme in the regulation of glycerol uptake and metabolism. Catalyzes the phosphorylation of glycerol to yield sn-glycerol 3-phosphate. This chain is Glycerol kinase, found in Desulforamulus reducens (strain ATCC BAA-1160 / DSM 100696 / MI-1) (Desulfotomaculum reducens).